Reading from the N-terminus, the 889-residue chain is Protein SEY1 homolog (889 aa).

At 1 to 801 (MDTKTQIIDY…ETGAKMSLKN (801 aa)) the chain is on the cytoplasmic side. The GB1/RHD3-type G domain maps to 31–277 (GFNYNVIAIL…IPSDGFAHYC (247 aa)). Residue 41–48 (GSQSSGKS) participates in GTP binding. Positions 429–449 (RKDGKGGSSPSAGDKKDTKDT) are disordered. Positions 679 to 699 (LDEIMDVLKSKLDEISDNLSS) form a coiled coil. A helical transmembrane segment spans residues 802-822 (VPLFFWVILLILGWNELLFFT). Residues 823 to 825 (RFF) lie on the Lumenal side of the membrane. Residues 826 to 846 (FRLNIILPLFLAAAVILSTLV) traverse the membrane as a helical segment. The Cytoplasmic segment spans residues 847–889 (FNGNMEVLSIINKAVFFLAKNSFGVYRQLQAMGGKAAQGAAAD).

It belongs to the TRAFAC class dynamin-like GTPase superfamily. GB1/RHD3 GTPase family. RHD3 subfamily.

The protein resides in the endoplasmic reticulum membrane. Its function is as follows. Probable GTP-binding protein involved in generating and maintaining the structure of the tubular endoplasmic reticulum network. This is Protein SEY1 homolog from Plasmodium vivax (strain Salvador I).